Here is a 576-residue protein sequence, read N- to C-terminus: Mycobactin import ATP-binding/permease protein IrtB (576 aa).

Residues 1–25 (MIRTLIALVPADKRGTLGLYTVLTV) are Cytoplasmic-facing. Positions 19-299 (LYTVLTVLSV…LSELTPAIES (281 aa)) constitute an ABC transmembrane type-1 domain. Residues 26–46 (LSVVIRAAGTVLLVPLVAALF) traverse the membrane as a helical segment. Residues 47 to 52 (GDTPQD) lie on the Periplasmic side of the membrane. A helical membrane pass occupies residues 53-73 (AWPWLGWLTAATAAGWIVDTT). Topologically, residues 74–131 (TSRLGFDLGFAVLDHTQHDVADRMPNIRLDWLTAENTATARAAIASTGPELVGLVVNL) are cytoplasmic. The next 2 membrane-spanning stretches (helical) occupy residues 132-152 (LTPL…LVAV) and 153-173 (SPPL…AMWA). Topologically, residues 174-241 (SNRLSRKADT…RLLAMQIPGQ (68 aa)) are cytoplasmic. Residues 242–262 (LLFSLASQLALILLAGMATWL) form a helical membrane-spanning segment. At 263 to 267 (TVRGE) the chain is on the periplasmic side. Residues 268–288 (LSVPEAVAMIVVVARYLEPFT) form a helical membrane-spanning segment. Topologically, residues 289–576 (SLSELTPAIE…HEAADWQITH (288 aa)) are cytoplasmic. The 234-residue stretch at 332 to 565 (IEFDCVTFGY…GGRFDEFWRR (234 aa)) folds into the ABC transporter domain. 364-371 (GPSGSGKS) is a binding site for ATP.

The protein belongs to the ABC transporter superfamily. Siderophore-Fe(3+) uptake transporter (SIUT) (TC 3.A.1.21) family. As to quaternary structure, forms a heterodimer with IrtA.

Its subcellular location is the cell inner membrane. Functionally, part of the ABC transporter complex IrtAB involved in the import of iron-bound mycobactin (Fe-MBT) and carboxymycobactin (Fe-cMBT). Has a preference for Fe-MBT over Fe-cMBT. Transmembrane domains (TMD) form a pore in the membrane and the ATP-binding domain (NBD) is responsible for energy generation. The polypeptide is Mycobactin import ATP-binding/permease protein IrtB (Mycolicibacterium smegmatis (strain ATCC 700084 / mc(2)155) (Mycobacterium smegmatis)).